The primary structure comprises 146 residues: Deoxyuridine 5'-triphosphate nucleotidohydrolase (146 aa).

Residues Arg-66 to Gly-68, Asn-79, Thr-83 to Asp-85, and Lys-93 contribute to the substrate site.

It belongs to the dUTPase family. Mg(2+) is required as a cofactor.

It carries out the reaction dUTP + H2O = dUMP + diphosphate + H(+). It functions in the pathway pyrimidine metabolism; dUMP biosynthesis; dUMP from dCTP (dUTP route): step 2/2. In terms of biological role, this enzyme is involved in nucleotide metabolism: it produces dUMP, the immediate precursor of thymidine nucleotides and it decreases the intracellular concentration of dUTP so that uracil cannot be incorporated into DNA. This Fusobacterium nucleatum subsp. nucleatum (strain ATCC 25586 / DSM 15643 / BCRC 10681 / CIP 101130 / JCM 8532 / KCTC 2640 / LMG 13131 / VPI 4355) protein is Deoxyuridine 5'-triphosphate nucleotidohydrolase.